A 332-amino-acid polypeptide reads, in one-letter code: tRNA dimethylallyltransferase (332 aa).

14–21 (GPTASGKT) is a binding site for ATP. Position 16 to 21 (16 to 21 (TASGKT)) interacts with substrate. An interaction with substrate tRNA region spans residues 39 to 42 (DSMQ). The tract at residues 313–332 (KRSSKHDCKPQHPRSSTREL) is disordered. Positions 317–332 (KHDCKPQHPRSSTREL) are enriched in basic and acidic residues.

The protein belongs to the IPP transferase family. As to quaternary structure, monomer. The cofactor is Mg(2+).

It carries out the reaction adenosine(37) in tRNA + dimethylallyl diphosphate = N(6)-dimethylallyladenosine(37) in tRNA + diphosphate. Functionally, catalyzes the transfer of a dimethylallyl group onto the adenine at position 37 in tRNAs that read codons beginning with uridine, leading to the formation of N6-(dimethylallyl)adenosine (i(6)A). The chain is tRNA dimethylallyltransferase from Staphylococcus haemolyticus (strain JCSC1435).